The primary structure comprises 408 residues: Serine/threonine transporter SstT (408 aa).

9 helical membrane passes run 19–39, 48–68, 86–106, 143–163, 193–213, 223–243, 294–314, 322–342, and 367–387; these read SLVSQIIVAIILASLLAVISP, LGSLFVNALKAVAPILVLVLV, IVGLYFLGTLSAALVAVLLSF, VTAVASGNFIAVLAWGLGLGF, FAPLGIFGLVANTIATTGFSA, VLLSAMLIIALLVNPLIVFII, IPLGATINMAGAAITITVLTL, IEVSFATAILLSVVASISACG, and VAMQVVAIGFIIGVIQDSAET.

It belongs to the dicarboxylate/amino acid:cation symporter (DAACS) (TC 2.A.23) family.

The protein localises to the cell inner membrane. It carries out the reaction L-serine(in) + Na(+)(in) = L-serine(out) + Na(+)(out). It catalyses the reaction L-threonine(in) + Na(+)(in) = L-threonine(out) + Na(+)(out). In terms of biological role, involved in the import of serine and threonine into the cell, with the concomitant import of sodium (symport system). The polypeptide is Serine/threonine transporter SstT (Colwellia psychrerythraea (strain 34H / ATCC BAA-681) (Vibrio psychroerythus)).